Reading from the N-terminus, the 165-residue chain is Putative 4-hydroxy-4-methyl-2-oxoglutarate aldolase (165 aa).

Substrate-binding positions include 80 to 83 and arginine 102; that span reads GGNL. Residue aspartate 103 participates in a divalent metal cation binding.

This sequence belongs to the class II aldolase/RraA-like family. In terms of assembly, homotrimer. A divalent metal cation serves as cofactor.

It carries out the reaction 4-hydroxy-4-methyl-2-oxoglutarate = 2 pyruvate. The catalysed reaction is oxaloacetate + H(+) = pyruvate + CO2. Functionally, catalyzes the aldol cleavage of 4-hydroxy-4-methyl-2-oxoglutarate (HMG) into 2 molecules of pyruvate. Also contains a secondary oxaloacetate (OAA) decarboxylase activity due to the common pyruvate enolate transition state formed following C-C bond cleavage in the retro-aldol and decarboxylation reactions. The sequence is that of Putative 4-hydroxy-4-methyl-2-oxoglutarate aldolase from Burkholderia mallei (strain NCTC 10247).